The chain runs to 249 residues: NADH dehydrogenase [ubiquinone] flavoprotein 2, mitochondrial (249 aa).

Residues 1-32 constitute a mitochondrion transit peptide; it reads MFFSAALRARAAGLTAQWGRHVRNLHKTAMQN. The residue at position 61 (lysine 61) is an N6-acetyllysine. 4 residues coordinate [2Fe-2S] cluster: cysteine 135, cysteine 140, cysteine 176, and cysteine 180. At tyrosine 193 the chain carries Phosphotyrosine; by SRC. The interval 213 to 249 is disordered; sequence IPKPGPRSGRFSCEPAGGLTSLTEPPKGPGFGVQAGL.

The protein belongs to the complex I 24 kDa subunit family. As to quaternary structure, core subunit of respiratory chain NADH dehydrogenase (Complex I) which is composed of 45 different subunits. This is a component of the flavoprotein-sulfur (FP) fragment of the enzyme. The cofactor is [2Fe-2S] cluster.

It localises to the mitochondrion inner membrane. It carries out the reaction a ubiquinone + NADH + 5 H(+)(in) = a ubiquinol + NAD(+) + 4 H(+)(out). Its function is as follows. Core subunit of the mitochondrial membrane respiratory chain NADH dehydrogenase (Complex I) which catalyzes electron transfer from NADH through the respiratory chain, using ubiquinone as an electron acceptor. Parts of the peripheral arm of the enzyme, where the electrons from NADH are accepted by flavin mononucleotide (FMN) and then passed along a chain of iron-sulfur clusters by electron tunnelling to the final acceptor ubiquinone. Contains one iron-sulfur cluster. The polypeptide is NADH dehydrogenase [ubiquinone] flavoprotein 2, mitochondrial (Gorilla gorilla gorilla (Western lowland gorilla)).